The sequence spans 246 residues: Sec-independent protein translocase protein TatB (246 aa).

The chain crosses the membrane as a helical span at residues 1-21 (MFDIGWSELLVIAVVLIVVVG). Disordered regions lie at residues 94-122 (SDLQ…APLV), 179-204 (SRSK…PKPT), and 225-246 (VADA…KDEA). Composition is skewed to polar residues over residues 97–112 (QKAT…TAAP) and 187–197 (PETTVATNASE).

It belongs to the TatB family. The Tat system comprises two distinct complexes: a TatABC complex, containing multiple copies of TatA, TatB and TatC subunits, and a separate TatA complex, containing only TatA subunits. Substrates initially bind to the TatABC complex, which probably triggers association of the separate TatA complex to form the active translocon.

The protein resides in the cell inner membrane. Functionally, part of the twin-arginine translocation (Tat) system that transports large folded proteins containing a characteristic twin-arginine motif in their signal peptide across membranes. Together with TatC, TatB is part of a receptor directly interacting with Tat signal peptides. TatB may form an oligomeric binding site that transiently accommodates folded Tat precursor proteins before their translocation. In Agrobacterium fabrum (strain C58 / ATCC 33970) (Agrobacterium tumefaciens (strain C58)), this protein is Sec-independent protein translocase protein TatB.